The chain runs to 310 residues: Protoheme IX farnesyltransferase (310 aa).

The next 9 helical transmembrane spans lie at 30–47, 50–70, 102–122, 126–146, 152–172, 181–201, 228–248, 251–271, and 286–306; these read VTTLIVMTAWTGAFFGAA, GLPLVSWTLFHALLGIGLVSG, LGHGMVVSLVMMIGGAGYLGL, WLTAALALMTSVVYLMAYTPL, ICTTIGAFPGAMPPVLGWTAI, VALFAILFFWQFPHFHSIAWL, IVIYAAFLLPITLTPFLLRFA, IYFLAALVLGSMLFWVSLRMF, and ARQLLLASVTYLPLLFAVMML.

Belongs to the UbiA prenyltransferase family. Protoheme IX farnesyltransferase subfamily.

Its subcellular location is the cell inner membrane. The enzyme catalyses heme b + (2E,6E)-farnesyl diphosphate + H2O = Fe(II)-heme o + diphosphate. It functions in the pathway porphyrin-containing compound metabolism; heme O biosynthesis; heme O from protoheme: step 1/1. Functionally, converts heme B (protoheme IX) to heme O by substitution of the vinyl group on carbon 2 of heme B porphyrin ring with a hydroxyethyl farnesyl side group. This chain is Protoheme IX farnesyltransferase, found in Koribacter versatilis (strain Ellin345).